The following is a 294-amino-acid chain: ATP phosphoribosyltransferase (294 aa).

Belongs to the ATP phosphoribosyltransferase family. Long subfamily. Mg(2+) serves as cofactor.

The protein localises to the cytoplasm. It catalyses the reaction 1-(5-phospho-beta-D-ribosyl)-ATP + diphosphate = 5-phospho-alpha-D-ribose 1-diphosphate + ATP. It functions in the pathway amino-acid biosynthesis; L-histidine biosynthesis; L-histidine from 5-phospho-alpha-D-ribose 1-diphosphate: step 1/9. Its activity is regulated as follows. Feedback inhibited by histidine. In terms of biological role, catalyzes the condensation of ATP and 5-phosphoribose 1-diphosphate to form N'-(5'-phosphoribosyl)-ATP (PR-ATP). Has a crucial role in the pathway because the rate of histidine biosynthesis seems to be controlled primarily by regulation of HisG enzymatic activity. The protein is ATP phosphoribosyltransferase of Chlorobium luteolum (strain DSM 273 / BCRC 81028 / 2530) (Pelodictyon luteolum).